Reading from the N-terminus, the 390-residue chain is Multidrug resistance protein MdtL (390 aa).

A run of 12 helical transmembrane segments spans residues 4-24 (FLIC…MYLV), 42-62 (IAFS…GKVA), 69-89 (PVAI…SRAT), 93-113 (LFLT…VVAF), 131-151 (LLNG…HLIM), 158-178 (SLFY…VFIL), 199-221 (LLNR…ILTF), 245-265 (ALTA…LSVF), 269-289 (TLML…SLSS), 293-313 (VTLF…GVAM), 316-336 (ALGP…IAQV), and 353-375 (ALNM…LMTI).

This sequence belongs to the major facilitator superfamily. DHA1 family. MdtL (TC 2.A.1.2.22) subfamily.

The protein resides in the cell inner membrane. The protein is Multidrug resistance protein MdtL of Citrobacter koseri (strain ATCC BAA-895 / CDC 4225-83 / SGSC4696).